The chain runs to 325 residues: MNALTAVKPTPAPLAQPYPGFSIAPSAQSPRLLELTFSAETTTQFLQQVAQWPVQALEYKSFLRFQVGKILDDLCGNQLQPLLIKTLLDRAEGALLINGEGIDNVSQAEEMVKLATAVAHLIGRSNFDAMSGQYYARFVVKNVDNSDSYLRQPHRVMELHNDGTYVEEQTDYVLMMKIDEQNMQGGNSLLLHLDDWEHLDEFFRDPLARRPMRWAAPPSKNVSKDVFHPVFDVDSLGRPVMRYIDQFVQPKDFEEGTWLSRLSDALETSKNILSIPVPVGKFLLINNLFWLHGRDRFTPHPDLRRELMRQRGYFAYSTNHYQTHQ.

The Fe cation site is built by H160, D162, and H292.

It belongs to the glutarate hydroxylase family. In terms of assembly, homotetramer. The cofactor is Fe(2+).

The enzyme catalyses glutarate + 2-oxoglutarate + O2 = (S)-2-hydroxyglutarate + succinate + CO2. Its pathway is amino-acid degradation. In terms of biological role, acts as an alpha-ketoglutarate-dependent dioxygenase catalyzing hydroxylation of glutarate (GA) to L-2-hydroxyglutarate (L2HG). Functions in a L-lysine degradation pathway that proceeds via cadaverine, glutarate and L-2-hydroxyglutarate. This Klebsiella pneumoniae (strain 342) protein is Glutarate 2-hydroxylase.